Here is a 239-residue protein sequence, read N- to C-terminus: Serine protease SplC (239 aa).

The signal sequence occupies residues 1 to 36 (MNKNIVIKSMAALAILTSVTGINAAVVEETQQIANA). Catalysis depends on charge relay system residues His75, Asp113, and Ser193.

Belongs to the peptidase S1B family.

The protein resides in the secreted. In Staphylococcus aureus (strain MW2), this protein is Serine protease SplC (splC).